The sequence spans 1034 residues: Enteropeptidase (1034 aa).

The propeptide occupies 1 to 51 (MGSKRIIPSRHRSLSTYEVMFTALFAILMVLCAGLIAVSWLTIKGSEKDAA). The Cytoplasmic portion of the chain corresponds to 2–18 (GSKRIIPSRHRSLSTYE). A helical; Signal-anchor for type II membrane protein membrane pass occupies residues 19-47 (VMFTALFAILMVLCAGLIAVSWLTIKGSE). The Extracellular segment spans residues 48-1034 (KDAALGKSHE…FTEWIQSFLH (987 aa)). One can recognise an SEA domain in the interval 54-169 (KSHEARGTMK…NSIDITESLE (116 aa)). Asparagine 116, asparagine 147, asparagine 170, and asparagine 194 each carry an N-linked (GlcNAc...) asparagine glycan. In terms of domain architecture, LDL-receptor class A 1 spans 197–238 (IECLPGSRPCADALKCIAVDLFCDGELNCPDGSDEDSKICAT). 4 cysteine pairs are disulfide-bonded: cysteine 199–cysteine 212, cysteine 206–cysteine 225, cysteine 219–cysteine 236, and cysteine 240–cysteine 268. Residues 240-349 (CDGKFLLTES…IGFNATYTAF (110 aa)) enclose the CUB 1 domain. N-linked (GlcNAc...) asparagine glycans are attached at residues asparagine 283, asparagine 343, asparagine 350, asparagine 403, asparagine 455, asparagine 485, asparagine 518, asparagine 549, and asparagine 645. The MAM domain maps to 357–519 (DEKINCNFED…ISLTYGICNV (163 aa)). The cysteines at positions 539 and 567 are disulfide-linked. Residues 539–649 (CGGPFELWEP…GGFKANFTTG (111 aa)) form the CUB 2 domain. Residues 656 to 694 (EPCKEDNFQCENGECVLLVNLCDGFSHCKDGSDEAHCVR) enclose the LDL-receptor class A 2 domain. 3 cysteine pairs are disulfide-bonded: cysteine 658–cysteine 670, cysteine 665–cysteine 683, and cysteine 677–cysteine 692. Residues 693-786 (VRFLNGTANN…LILLQCNHKS (94 aa)) enclose the SRCR domain. Asparagine 697, asparagine 701, asparagine 721, asparagine 740, and asparagine 761 each carry an N-linked (GlcNAc...) asparagine glycan. Cystine bridges form between cysteine 772-cysteine 782, cysteine 787-cysteine 911, cysteine 825-cysteine 841, cysteine 925-cysteine 992, cysteine 956-cysteine 971, and cysteine 982-cysteine 1010. The Peptidase S1 domain occupies 800-1034 (IVGGNDSREG…FTEWIQSFLH (235 aa)). A glycan (N-linked (GlcNAc...) asparagine) is linked at asparagine 804. Histidine 840 (charge relay system) is an active-site residue. An N-linked (GlcNAc...) asparagine glycan is attached at asparagine 863. Aspartate 891 serves as the catalytic Charge relay system. N-linked (GlcNAc...) asparagine glycans are attached at residues asparagine 902 and asparagine 964. The active-site Charge relay system is the serine 986.

This sequence belongs to the peptidase S1 family. Heterotrimer of a catalytic (light) chain, a multidomain (heavy) chain, and a mini chain. Post-translationally, the chains are derived from a single precursor that is cleaved by a trypsin-like protease. In terms of processing, the mini chain may be cleaved by elastase.

It is found in the membrane. The enzyme catalyses Activation of trypsinogen by selective cleavage of 6-Lys-|-Ile-7 bond.. Functionally, responsible for initiating activation of pancreatic proteolytic proenzymes (trypsin, chymotrypsin and carboxypeptidase A). It catalyzes the conversion of trypsinogen to trypsin which in turn activates other proenzymes including chymotrypsinogen, procarboxypeptidases, and proelastases. This is Enteropeptidase (TMPRSS15) from Sus scrofa (Pig).